Consider the following 424-residue polypeptide: Inhibin beta A chain (424 aa).

The first 20 residues, 1 to 20 (MPLLWLRGFLLASCWIIVRS), serve as a signal peptide directing secretion. The propeptide occupies 21–308 (SPTPGSEGPG…EDHPHRRRRR (288 aa)). Asn165 carries an N-linked (GlcNAc...) asparagine glycan. Positions 257 to 288 (KKKKKEEEGEGKKKDGGDGGAGADEDKEQSHR) are disordered. The span at 261–273 (KEEEGEGKKKDGG) shows a compositional bias: basic and acidic residues. Cystine bridges form between Cys312–Cys320, Cys319–Cys389, Cys348–Cys421, and Cys352–Cys423.

The protein belongs to the TGF-beta family. Dimeric, linked by one or more disulfide bonds. Inhibin A is a dimer of alpha/INHA and beta-A/INHBA. Activin A is a homodimer of beta-A/INHBA. Activin AB is a dimer of beta-A/INHBA and beta-B/INHBB. Interacts with FST and FSTL3; these interactions prevent activin A interaction to its type II receptor. Activin A interacts with ACVR2A. Activin A interacts with BMPR2. Inhibin A interacts with ACVR1; this interaction creates a non-signaling complex (NSC) that inhibits ACVR1-mediated BMP signaling. Inhibin A interacts with ACVR2A.

The protein localises to the secreted. Functionally, inhibins/activins are involved in regulating a number of diverse functions such as hypothalamic and pituitary hormone secretion, gonadal hormone secretion, germ cell development and maturation, erythroid differentiation, insulin secretion, nerve cell survival, embryonic axial development or bone growth, depending on their subunit composition. In terms of biological role, activin A is a homodimer of INHBA that plays a role in several essential biological processes including embryonic development, stem cell maintenance and differentiation, haematopoiesis, cell proliferation and tissue fibrosis. Signals through type I (such as ACVR1B or ACVR1C) and type II receptors (such as ACVR2A, ACVR2B or BMPR2) which, upon ligand binding, phosphorylate SMAD2 and SMAD3 intracellular signaling mediators that form a complex with SMAD4, translocate to the nucleus and modulate gene expression. Can also activate alternative non-canonical intracellular signaling pathways including the p38 MAPK, extracellular signal-regulated kinases 1/2 (ERK1/2) and c-Jun N-terminal kinases (JNKs) to modulate cell migration and differentiation. Alternatively, promotes osteoblastic differentiation via ACVRL1-SMAD1/5/9 pathway. In addition, can engage the type I receptor ACVR1 to form an ACVR1-activin A-type II receptor non-signaling complex (NSC) that renders receptors unavailable for engagement with BMPs, hence resulting in an apparent inhibition of ACVR1-mediated BMP signaling. Its function is as follows. Inhibin A is a dimer of alpha/INHA and beta-A/INHBA that functions as a feedback regulator in the hypothalamic-pituitary-gonadal (HPG) axis. Inhibits the secretion of FSH from the anterior pituitary gland by acting on pituitary gonadotrope cells. Antagonizes activin A by binding to the proteoglycan, betaglycan, and forming a stable complex with and, thereby, sequestering type II activin receptors while excluding type I receptor. This chain is Inhibin beta A chain (INHBA), found in Felis catus (Cat).